Reading from the N-terminus, the 301-residue chain is Putative S-adenosyl-L-methionine-dependent methyltransferase BCG_0775c (301 aa).

Residues aspartate 130 and 159 to 160 (DL) each bind S-adenosyl-L-methionine.

The protein belongs to the UPF0677 family.

Its function is as follows. Exhibits S-adenosyl-L-methionine-dependent methyltransferase activity. In Mycobacterium bovis (strain BCG / Pasteur 1173P2), this protein is Putative S-adenosyl-L-methionine-dependent methyltransferase BCG_0775c.